We begin with the raw amino-acid sequence, 588 residues long: Calcium/calmodulin-dependent protein kinase kinase 2 (588 aa).

Positions 1–14 (MSSCVSSQPSSNRA) are enriched in polar residues. Disordered stretches follow at residues 1–33 (MSSC…SQKP) and 78–100 (GQEV…RKLS). An N-acetylserine modification is found at Ser-2. 5 positions are modified to phosphoserine: Ser-100, Ser-114, Ser-129, Ser-133, and Ser-137. Over residues 128–139 (YSPVSSPQSSPR) the composition is skewed to low complexity. The interval 128–149 (YSPVSSPQSSPRLPRRPTVESH) is disordered. Residues 165–446 (YTLKDEIGKG…VPEIKLHPWV (282 aa)) enclose the Protein kinase domain. ATP-binding positions include 171–179 (IGKGSYGVV) and Lys-194. An RP domain region spans residues 204-226 (QAGFPRRPPPRGTRPAPGGCIQP). Residues 205-225 (AGFPRRPPPRGTRPAPGGCIQ) are disordered. The Proton acceptor role is filled by Asp-312. The autoinhibitory domain stretch occupies residues 472 to 477 (ENSVKH). The tract at residues 475-500 (VKHIPSLATVILVKTMIRKRSFGNPF) is calmodulin-binding. A phosphoserine mark is found at Pro-479, Ser-495, Ser-511, Thr-522, and Ser-572. Residues 497 to 588 (GNPFEGSRRE…LRPEEAMEPE (92 aa)) are disordered. Residues 521–536 (PTRECESLSELKEARQ) are compositionally biased toward basic and acidic residues. Residues 579–588 (LRPEEAMEPE) are compositionally biased toward basic and acidic residues.

The protein belongs to the protein kinase superfamily. Ser/Thr protein kinase family. In terms of assembly, interacts with calmodulin. Post-translationally, autophosphorylated and phosphorylated by PKA. Each isoform may show a different pattern of phosphorylation. As to expression, ubiquitously expressed with higher levels in the brain. Intermediate levels are detected in spleen, prostate, thyroid and leukocytes. The lowest level is in lung.

The protein resides in the nucleus. The protein localises to the cytoplasm. It localises to the cell projection. Its subcellular location is the neuron projection. The catalysed reaction is L-seryl-[protein] + ATP = O-phospho-L-seryl-[protein] + ADP + H(+). The enzyme catalyses L-threonyl-[protein] + ATP = O-phospho-L-threonyl-[protein] + ADP + H(+). Its activity is regulated as follows. Activated by Ca(2+)/calmodulin. Binding of calmodulin may relieve intrasteric autoinhibition. Autophosphorylation does not alter activity or regulation by Ca(2+)/calmodulin. In part, activity is independent on Ca(2+)/calmodulin. Functionally, calcium/calmodulin-dependent protein kinase belonging to a proposed calcium-triggered signaling cascade involved in a number of cellular processes. Isoform 1, isoform 2 and isoform 3 phosphorylate CAMK1 and CAMK4. Isoform 3 phosphorylates CAMK1D. Isoform 4, isoform 5 and isoform 6 lacking part of the calmodulin-binding domain are inactive. Efficiently phosphorylates 5'-AMP-activated protein kinase (AMPK) trimer, including that consisting of PRKAA1, PRKAB1 and PRKAG1. This phosphorylation is stimulated in response to Ca(2+) signals. Seems to be involved in hippocampal activation of CREB1. May play a role in neurite growth. Isoform 3 may promote neurite elongation, while isoform 1 may promoter neurite branching. The chain is Calcium/calmodulin-dependent protein kinase kinase 2 (CAMKK2) from Homo sapiens (Human).